The sequence spans 161 residues: UPF0178 protein PXO_00400 (161 aa).

Belongs to the UPF0178 family.

The chain is UPF0178 protein PXO_00400 from Xanthomonas oryzae pv. oryzae (strain PXO99A).